Here is a 327-residue protein sequence, read N- to C-terminus: Sphingomyelinase D (327 aa).

A signal peptide spans 1–23; the sequence is MQPLTRTICALFCLLLTLPLTFG. H52 is a catalytic residue. E72, D74, and D117 together coordinate Mg(2+). Positions 320-327 match the SMD-tail motif; it reads VTGADKLW.

This sequence belongs to the sphingomyelinase D/phospholipase D family. Requires Mg(2+) as cofactor.

It localises to the secreted. The enzyme catalyses a sphingomyelin + H2O = an N-acylsphing-4-enine 1-phosphate + choline + H(+). Its function is as follows. Catalyzes the hydrolysis of sphingomyelin. Sphingomyelinases D are produced by some spider in their venoms, but also by arthropods such as ticks, or pathogenic bacteria and fungi. They might play a role in pathogenicity through different mechanisms, such as membrane destabilization and host cell penetration, but also pulmonary inflammation and cutaneous lesions. The sequence is that of Sphingomyelinase D from Paracoccidioides brasiliensis (strain Pb03).